Here is a 390-residue protein sequence, read N- to C-terminus: Chitinase-3-like protein 2 (390 aa).

The signal sequence occupies residues 1–26 (MGATTMDQKSLWAGVVVLLLLQGGSA). Residues 27–390 (YKLVCYFTNW…QAVKRSLGSL (364 aa)) form the GH18 domain. A disulfide bond links Cys-31 and Cys-56. N-linked (GlcNAc...) asparagine glycosylation is present at Asn-35. Chitin contacts are provided by residues 75 to 76 (DK), 102 to 105 (GGYL), Tyr-104, Tyr-146, 210 to 213 (LSFD), Asp-213, and Trp-360.

Belongs to the glycosyl hydrolase 18 family. Highest expression in chondrocytes, followed by synoviocytes, lung and heart. Not detected in spleen, pancreas, and liver. May also be expressed in developing brain and placenta.

It localises to the secreted. Functionally, lectin that binds chitooligosaccharides and other glycans with high affinity, but not heparin. Has no chitinase activity. This Homo sapiens (Human) protein is Chitinase-3-like protein 2 (CHI3L2).